The chain runs to 449 residues: Exodeoxyribonuclease 7 large subunit (449 aa).

Belongs to the XseA family. As to quaternary structure, heterooligomer composed of large and small subunits.

The protein resides in the cytoplasm. It catalyses the reaction Exonucleolytic cleavage in either 5'- to 3'- or 3'- to 5'-direction to yield nucleoside 5'-phosphates.. Its function is as follows. Bidirectionally degrades single-stranded DNA into large acid-insoluble oligonucleotides, which are then degraded further into small acid-soluble oligonucleotides. The protein is Exodeoxyribonuclease 7 large subunit of Salmonella agona (strain SL483).